A 1022-amino-acid chain; its full sequence is GPI ethanolamine phosphate transferase 1 (1022 aa).

The Cytoplasmic segment spans residues 1-6; sequence MARVGR. A helical membrane pass occupies residues 7–27; sequence VGFLTLAVVFHLMYAYSIFDI. The Lumenal segment spans residues 28–466; sequence YFVSPIVSGM…LQTYDWLFLR (439 aa). 2 N-linked (GlcNAc...) asparagine glycosylation sites follow: asparagine 148 and asparagine 433. Residues 467–487 form a helical membrane-spanning segment; sequence TIVSLGYLGWIAYALTTVIDL. Residues 488 to 498 are Cytoplasmic-facing; it reads HVLHGKSESNR. Residues 499–519 traverse the membrane as a helical segment; the sequence is TTFSIMFFSSILVALFSVLLY. Over 520–560 the chain is Lumenal; it reads QGSSWRYYLYALFPIFFWEEVFARRKALLAGREILLGHVHS. A helical membrane pass occupies residues 561–581; the sequence is VSGYFAFAIQLLLYVGVLEAL. The Cytoplasmic portion of the chain corresponds to 582 to 589; sequence VQSYFHRD. A helical membrane pass occupies residues 590–610; that stretch reads IFTVCFILGGFWPITYGTKFL. At 611 to 614 the chain is on the lumenal side; sequence GQHK. The chain crosses the membrane as a helical span at residues 615–635; the sequence is LLSASWALGCFLMSIFTLLPA. The Cytoplasmic portion of the chain corresponds to 636-640; the sequence is NKVED. Residues 641 to 661 traverse the membrane as a helical segment; it reads MMMISCGSLLMFLTGLLYLIF. The Lumenal segment spans residues 662-685; it reads ERSILGQKRSSDPNSVVSSCGSRT. A helical membrane pass occupies residues 686–706; that stretch reads IMGAQVGMILLALIVTRSSVA. At 707-713 the chain is on the cytoplasmic side; that stretch reads SLQAKQG. The helical transmembrane segment at 714–734 threads the bilayer; that stretch reads LPLGNQVLGWAILVSSLLLPF. Residues 735–749 are Lumenal-facing; it reads LHRLYPNSHYLHRLM. Transmembrane regions (helical) follow at residues 750–770 and 771–791; these read VIFL…EGLF and YFVF…IYIH. The Lumenal portion of the chain corresponds to 792–837; the sequence is TTAPTREQDHSVANGSLPAKKPSPGNTVVVEGQPYRYRTLSVSDAR. N-linked (GlcNAc...) asparagine glycosylation occurs at asparagine 805. A helical membrane pass occupies residues 838 to 858; the sequence is VALFFFFLLQSGFFSTGNIAS. The Cytoplasmic segment spans residues 859–880; it reads VSSFSLDSVYRLIPIFNPFAQG. The chain crosses the membrane as a helical span at residues 881–901; it reads ALLILKLLIPFAIISANLGIL. Topologically, residues 902–910 are lumenal; it reads NHRLEVAPS. A helical membrane pass occupies residues 911–931; it reads ALFMVVMSISDVMTLNFFYMV. At 932–947 the chain is on the cytoplasmic side; the sequence is RDEGSWLEIGTTISHF. A helical transmembrane segment spans residues 948 to 968; the sequence is CIASFLCTFVAVLEFLSELFI. The Lumenal segment spans residues 969 to 1022; that stretch reads SGVDFGHPATTVGSAVAKAVNGSVACGHSPDSDISGEDSTSVGITAKADPDARS. The N-linked (GlcNAc...) asparagine glycan is linked to asparagine 989. Residues 998 to 1022 form a disordered region; it reads PDSDISGEDSTSVGITAKADPDARS.

Belongs to the PIGG/PIGN/PIGO family. PIGN subfamily.

It localises to the endoplasmic reticulum membrane. It participates in glycolipid biosynthesis; glycosylphosphatidylinositol-anchor biosynthesis. Its function is as follows. Ethanolamine phosphate transferase involved in glycosylphosphatidylinositol-anchor biosynthesis. Transfers ethanolamine phosphate to the first alpha-1,4-linked mannose of the glycosylphosphatidylinositol precursor of GPI-anchor. The sequence is that of GPI ethanolamine phosphate transferase 1 (mcd4) from Aspergillus oryzae (strain ATCC 42149 / RIB 40) (Yellow koji mold).